The following is a 676-amino-acid chain: Hypermethylated in cancer 1 protein (676 aa).

The interval 1–27 is disordered; it reads APGARPAASRERGHKSREERCGERGAA. The segment covering 8 to 23 has biased composition (basic and acidic residues); it reads ASRERGHKSREERCGE. In terms of domain architecture, BTB spans 63–126; that stretch reads CDVIIVVQNA…IYTGRLGECE (64 aa). Residues 241–245 are binding to CtBP; it reads GLDLS. Disordered stretches follow at residues 264–326 and 342–405; these read PAEP…LPRG and GPYL…DRYC. 2 stretches are compositionally biased toward basic and acidic residues: residues 266–278 and 351–361; these read EPRE…RHDS and EKELEREEKAE. The segment covering 384–398 has biased composition (low complexity); the sequence is STSEETGSSEGPSPG. C2H2-type zinc fingers lie at residues 420 to 447, 474 to 501, 502 to 529, 530 to 557, and 558 to 585; these read YVCI…EEEL, YRCS…LTRP, YPCT…GLKP, FACD…GEKP, and YECQ…AGPD.

Belongs to the krueppel C2H2-type zinc-finger protein family. Hic subfamily. As to quaternary structure, interacts with CtBP. As to expression, isoform 1 is highly expressed in kidney and lung. Expression of isoform 2 is higher in the lens, retina and stomach, and extremely low in heart, muscle, kidney and lung. Isoform 3 is weakly expressed in heart, kidney and lens.

It localises to the nucleus. Its function is as follows. Binds specifically to the gamma F-1-binding motif of the gamma F-crystallin promoter. May have a regulatory role in sclerotome specification and/or differentiation. Isoform 2 functions as a transcriptional repressor in lens cells. This chain is Hypermethylated in cancer 1 protein (HIC1), found in Gallus gallus (Chicken).